The primary structure comprises 81 residues: Putative membrane protein insertion efficiency factor (81 aa).

A disordered region spans residues 61 to 81; sequence NPGGYDPVPPIPTSRSSSMAE.

It belongs to the UPF0161 family.

The protein resides in the cell inner membrane. Its function is as follows. Could be involved in insertion of integral membrane proteins into the membrane. The protein is Putative membrane protein insertion efficiency factor of Pseudomonas fluorescens (strain Pf0-1).